Here is a 280-residue protein sequence, read N- to C-terminus: Serine protease 33 (280 aa).

The first 22 residues, 1–22 (MRGVSCLQVLLLLVLGAAGTQG), serve as a signal peptide directing secretion. One can recognise a Peptidase S1 domain in the interval 37–279 (IVGGRDGRDG…YSPWIQARVS (243 aa)). An intrachain disulfide couples Cys62 to Cys78. Active-site charge relay system residues include His77 and Asp126. 3 disulfides stabilise this stretch: Cys160/Cys237, Cys193/Cys216, and Cys227/Cys255. The active-site Charge relay system is Ser231.

Belongs to the peptidase S1 family. Predominantly expressed in macrophages. Present in the spleen, small and large intestine, lung and brain (at protein level). Highly expressed in peripheral leukocytes, ovary, retina, spleen and stomach. Moderately expressed in thymus, uterus and platelets, as well as some brain tissues, such as thalamus and fetal brain.

It localises to the secreted. Serine protease that has amidolytic activity, cleaving its substrates before Arg residues. This chain is Serine protease 33 (PRSS33), found in Homo sapiens (Human).